The following is a 429-amino-acid chain: Histidinol dehydrogenase (429 aa).

NAD(+) contacts are provided by Tyr-127, Gln-188, and Asn-211. Substrate is bound by residues Ser-234, Gln-256, and His-259. 2 residues coordinate Zn(2+): Gln-256 and His-259. Active-site proton acceptor residues include Glu-324 and His-325. Substrate-binding residues include His-325, Asp-358, Glu-412, and His-417. Residue Asp-358 coordinates Zn(2+). His-417 serves as a coordination point for Zn(2+).

This sequence belongs to the histidinol dehydrogenase family. Zn(2+) serves as cofactor.

It carries out the reaction L-histidinol + 2 NAD(+) + H2O = L-histidine + 2 NADH + 3 H(+). The protein operates within amino-acid biosynthesis; L-histidine biosynthesis; L-histidine from 5-phospho-alpha-D-ribose 1-diphosphate: step 9/9. In terms of biological role, catalyzes the sequential NAD-dependent oxidations of L-histidinol to L-histidinaldehyde and then to L-histidine. The sequence is that of Histidinol dehydrogenase from Bacillus thuringiensis subsp. konkukian (strain 97-27).